The primary structure comprises 116 residues: Co-chaperonin GroES (116 aa).

The protein belongs to the GroES chaperonin family. In terms of assembly, heptamer of 7 subunits arranged in a ring. Interacts with the chaperonin GroEL.

It localises to the cytoplasm. In terms of biological role, together with the chaperonin GroEL, plays an essential role in assisting protein folding. The GroEL-GroES system forms a nano-cage that allows encapsulation of the non-native substrate proteins and provides a physical environment optimized to promote and accelerate protein folding. GroES binds to the apical surface of the GroEL ring, thereby capping the opening of the GroEL channel. The sequence is that of Co-chaperonin GroES from Mycoplasma pneumoniae (strain ATCC 29342 / M129 / Subtype 1) (Mycoplasmoides pneumoniae).